The chain runs to 392 residues: F-box/kelch-repeat protein At4g39550 (392 aa).

The span at 1 to 12 shows a compositional bias: basic residues; sequence MSSPEKKRKTTK. Residues 1 to 27 form a disordered region; the sequence is MSSPEKKRKTTKKPSPTPQSTTPNPSL. Residues 18 to 27 are compositionally biased toward low complexity; it reads PQSTTPNPSL. An F-box domain is found at 21 to 67; it reads TTPNPSLPDDLVVSCLARVSRLYYPTLSLVSKSFRSLIASPDLYKTR. Kelch repeat units follow at residues 148–194, 195–242, and 244–285; these read NIYN…VVEG, KIYV…KSAV, and EGEI…VVEN.

Part of a SCF (ASK-cullin-F-box) protein ligase complex. Interacts with ASK13 and ASK14.

It participates in protein modification; protein ubiquitination. Its function is as follows. Component of SCF(ASK-cullin-F-box) E3 ubiquitin ligase complexes, which may mediate the ubiquitination and subsequent proteasomal degradation of target proteins. This chain is F-box/kelch-repeat protein At4g39550, found in Arabidopsis thaliana (Mouse-ear cress).